Reading from the N-terminus, the 67-residue chain is Teratocyte protein CftICK-II (67 aa).

Positions 1-25 (MVKSLLFAIGYLIFLLVTRVNVINA) are cleaved as a signal peptide. 3 cysteine pairs are disulfide-bonded: Cys-28/Cys-42, Cys-35/Cys-46, and Cys-41/Cys-57.

Abundantly expressed by teratocytes, which are extra-embryonic cells released by parasitoid wasps into their hosts during larval eclosion.

It localises to the secreted. This endoparasitoid wasp peptide has immununosuppressive, antimicrobial and insecticidal activities. Suppress cellular immunity which is detectable as a reduction of hemocyte encapsulation in the host. Shows moderate antifungal activity against C.albicans (MIC=4 ug/ml). In vivo, ingestion of this peptide (probably at excessive doses) increases larval mortality and reduces leaf consumption of D.saccharalis, a permissive host for C.flavipes. The protein is Teratocyte protein CftICK-II of Cotesia flavipes (Parasitic wasp).